A 200-amino-acid chain; its full sequence is Glycerol-3-phosphate acyltransferase (200 aa).

The next 4 helical transmembrane spans lie at 4 to 24, 70 to 90, 110 to 130, and 158 to 178; these read ALLAVLGGYLLGSIPTGYWVG, ALGSALGSAWWVVLAALFAVI, LGILLAMAWPVALTTFGVWLL, and QPLPYLLFALAGGVYVIGAHR.

This sequence belongs to the PlsY family. As to quaternary structure, probably interacts with PlsX.

The protein resides in the cell inner membrane. The catalysed reaction is an acyl phosphate + sn-glycerol 3-phosphate = a 1-acyl-sn-glycero-3-phosphate + phosphate. It participates in lipid metabolism; phospholipid metabolism. Functionally, catalyzes the transfer of an acyl group from acyl-phosphate (acyl-PO(4)) to glycerol-3-phosphate (G3P) to form lysophosphatidic acid (LPA). This enzyme utilizes acyl-phosphate as fatty acyl donor, but not acyl-CoA or acyl-ACP. This Synechococcus sp. (strain JA-2-3B'a(2-13)) (Cyanobacteria bacterium Yellowstone B-Prime) protein is Glycerol-3-phosphate acyltransferase.